We begin with the raw amino-acid sequence, 160 residues long: MEINVIVKPPFKKLVSAQFLKKIASETLKAQAADPSSELGIVITGQEEIKELNCKYRQLDEPTDVLSFYMLEENPENLTAPDDFPTPPDEATHLGEVIISYPQAELQAGAAGHSVNHELAFLLIHGVLHLLGYDHHETAAEAVMKSHQDIAMKHIREILE.

Positions 125, 129, and 135 each coordinate Zn(2+).

It belongs to the endoribonuclease YbeY family. Zn(2+) serves as cofactor.

It localises to the cytoplasm. In terms of biological role, single strand-specific metallo-endoribonuclease involved in late-stage 70S ribosome quality control and in maturation of the 3' terminus of the 16S rRNA. The protein is Endoribonuclease YbeY of Dehalococcoides mccartyi (strain ATCC BAA-2100 / JCM 16839 / KCTC 5957 / BAV1).